The primary structure comprises 1381 residues: MEVLMAERPTQVFHNKVIDGTAMKRLISRFIDHYGIGYTSHILDQVKTLGFRQATAASISLGIDDLLTIPSKRWLVQDAEQQSFILEKHHHYGNVHAVEKLRQSIEIWYATSEYLRQEMNPNFRMTDPFNPVHIMSFSGARGNASQVHQLVGMRGLMSDPQGQMIDLPIQSNLREGLSLTEYIISCYGARKGVVDTAIRTSDAGYLTRRLVEVVQHIVVRRTDCGTVRGISVSPRNGMMTDRIFIQTLIGRVLADDIYIGSRCIATRNQDIGVGLVSRFITFRAQPISIRTPFTCRSTSWICQLCYGRSPAHDDLVELGEAVGIIAGQSIGEPGTQLTLRTFHTGGVFTGGTAEHVRAPSNGKIKFNEDLVHPTRTRHGHPAFLCSRDLYVTIESEDIIHNVCIPPKSFLLVQNDQYVESEQVIAEIRARTSTLNLKEKVRKHIYSDSEGEMHWNTDVYHAPEFTYGNIHLLPKTSHLWILLGEPWRYSLGPCSIHKDQDQMNAYSLSVKPRYIANPSVTNNQVRHKFFSSYFSGKNQKGDRIPDCSELNRMTCTDHSNLRYPAILDGNSDLLAKRRRNRFIIPLESIQEGENQLIPSSGISMEIPRNGILRRNSILAYFDDPRYIRKSSGLTKYETRELNSIVNEENLIEYRGVKVFWPKYQKEVNPFFFIPVEVHILSESSSIMVRHNSIIGADTQITFNRRSRVGGLVRVKKKAEKMKLIIFSGDIHFPGKTNKAFRLIPPGGGKPNSKEYKKLKNWLYIQRMKLSRYEKKYFVLVQPVVPYKKTDGINLGRLFPPDLLQESDNLQLRVVNYILYYDPILEIWDTSIQLVRTSLVLNWDQDKKIEKACASFVEIRTNGLLRYFLRIDLAKSPISYTGKRNDLSGSGLISENGSDRANVNPFSSIYSYSKSRIKESLNPNQGTIHTLLNRNKESQSLIILSSSNCFRIGPFNDVKSPNVIKESIKKNPLIPIRNSLGPLGTGFPIYNFDLFSHLITHNQILVTNYLQLDNFKQIFQILKYYLLDENGQIYNPYSCSNIILNPFHLNWYFLHYNYCEETSPIVSLGQFLCENVCIAKKGPHLKSGQVLIVQVDSVVIRSAKPYLATPGATVHGHYGEILYEGDTLVTFIYEKSRSGDITQGLPKVEQVLEVRSIDSISMNLEKRIEGWNKSITRILGIPWAFLIGAELTIVQSRISLVNKVQKVYRSQGVQIHNRHIEIIVRQITSKVLVSEDEMSNVFSPGELIGLLRAERMGRALEEAICYQAVLLGITRASMNTQSFISEASFQETARVLAKAALLGRIDWLKGLKENVVLGGMIPVGSGFKTPSSEPNNIPNNIAFELQKKNLLEGEMKDILFYHRKLFDSCLSNNFHDTQEQSFF.

Zn(2+)-binding residues include C224, C295, C302, and C305.

This sequence belongs to the RNA polymerase beta' chain family. RpoC2 subfamily. As to quaternary structure, in plastids the minimal PEP RNA polymerase catalytic core is composed of four subunits: alpha, beta, beta', and beta''. When a (nuclear-encoded) sigma factor is associated with the core the holoenzyme is formed, which can initiate transcription. Requires Zn(2+) as cofactor.

The protein resides in the plastid. It localises to the chloroplast. It catalyses the reaction RNA(n) + a ribonucleoside 5'-triphosphate = RNA(n+1) + diphosphate. Functionally, DNA-dependent RNA polymerase catalyzes the transcription of DNA into RNA using the four ribonucleoside triphosphates as substrates. The polypeptide is DNA-directed RNA polymerase subunit beta'' (Lactuca sativa (Garden lettuce)).